Here is an 88-residue protein sequence, read N- to C-terminus: MLATEKKQELIDQYKRHEGDTGSPEVQIALLSERITYLTEHFRTHKKDHHSRRGLLKIVGQRRRLLDYLKSNDVERYRAIIKSLGIRR.

A compositionally biased stretch (basic and acidic residues) spans 1–20 (MLATEKKQELIDQYKRHEGD). Residues 1–21 (MLATEKKQELIDQYKRHEGDT) are disordered.

The protein belongs to the universal ribosomal protein uS15 family. As to quaternary structure, part of the 30S ribosomal subunit. Forms a bridge to the 50S subunit in the 70S ribosome, contacting the 23S rRNA.

Its function is as follows. One of the primary rRNA binding proteins, it binds directly to 16S rRNA where it helps nucleate assembly of the platform of the 30S subunit by binding and bridging several RNA helices of the 16S rRNA. In terms of biological role, forms an intersubunit bridge (bridge B4) with the 23S rRNA of the 50S subunit in the ribosome. The protein is Small ribosomal subunit protein uS15 of Syntrophotalea carbinolica (strain DSM 2380 / NBRC 103641 / GraBd1) (Pelobacter carbinolicus).